Consider the following 571-residue polypeptide: Putative F-box protein At5g39460 (571 aa).

One can recognise an F-box domain in the interval 9–55 (ACLLLTLPEDVFAVISRFLSPSDICNLILCGKSLCALVDSEKTWLVQ).

In Arabidopsis thaliana (Mouse-ear cress), this protein is Putative F-box protein At5g39460.